Consider the following 350-residue polypeptide: Protein CONSERVED ONLY IN THE GREEN LINEAGE 160, chloroplastic (350 aa).

A chloroplast-targeting transit peptide spans 1–46 (MAILSYISATSTTPPIPQDQSPNSRLPTKIILPNKKPEKWSTGVAP). The segment covering 7–26 (ISATSTTPPIPQDQSPNSRL) has biased composition (polar residues). Positions 7-58 (ISATSTTPPIPQDQSPNSRLPTKIILPNKKPEKWSTGVAPGEYGGPPTTTKL) are disordered. S117 is subject to Phosphoserine. 4 helical membrane passes run 213-233 (KNKI…SAYI), 239-259 (IALS…MLGN), 276-296 (ANQP…RWNA), and 304-324 (FMHL…IATF).

The protein localises to the plastid. It localises to the chloroplast thylakoid membrane. Facilitates the assembly of the membrane proton channel of the chloroplastic F-type ATPase. Specifically required for the efficient assembly and integration of the CF(0) subunit c into the chloroplastic ATPase complex in the thylakoid membrane. This chain is Protein CONSERVED ONLY IN THE GREEN LINEAGE 160, chloroplastic, found in Arabidopsis thaliana (Mouse-ear cress).